A 249-amino-acid polypeptide reads, in one-letter code: Pyridoxine 5'-phosphate synthase (249 aa).

Asn-10 is a binding site for 3-amino-2-oxopropyl phosphate. 12–13 (DH) contributes to the 1-deoxy-D-xylulose 5-phosphate binding site. Arg-21 is a binding site for 3-amino-2-oxopropyl phosphate. His-46 serves as the catalytic Proton acceptor. Arg-48 and His-53 together coordinate 1-deoxy-D-xylulose 5-phosphate. Glu-73 (proton acceptor) is an active-site residue. 1-deoxy-D-xylulose 5-phosphate is bound at residue Thr-103. Catalysis depends on His-194, which acts as the Proton donor. Residues Gly-195 and 216-217 (GH) each bind 3-amino-2-oxopropyl phosphate.

Belongs to the PNP synthase family. Homooctamer; tetramer of dimers.

The protein resides in the cytoplasm. It catalyses the reaction 3-amino-2-oxopropyl phosphate + 1-deoxy-D-xylulose 5-phosphate = pyridoxine 5'-phosphate + phosphate + 2 H2O + H(+). It functions in the pathway cofactor biosynthesis; pyridoxine 5'-phosphate biosynthesis; pyridoxine 5'-phosphate from D-erythrose 4-phosphate: step 5/5. Its function is as follows. Catalyzes the complicated ring closure reaction between the two acyclic compounds 1-deoxy-D-xylulose-5-phosphate (DXP) and 3-amino-2-oxopropyl phosphate (1-amino-acetone-3-phosphate or AAP) to form pyridoxine 5'-phosphate (PNP) and inorganic phosphate. This chain is Pyridoxine 5'-phosphate synthase, found in Rhodospirillum rubrum (strain ATCC 11170 / ATH 1.1.1 / DSM 467 / LMG 4362 / NCIMB 8255 / S1).